The chain runs to 881 residues: Alanine--tRNA ligase (881 aa).

Zn(2+)-binding residues include His-565, His-569, Cys-672, and His-676.

It belongs to the class-II aminoacyl-tRNA synthetase family. The cofactor is Zn(2+).

It localises to the cytoplasm. It catalyses the reaction tRNA(Ala) + L-alanine + ATP = L-alanyl-tRNA(Ala) + AMP + diphosphate. Catalyzes the attachment of alanine to tRNA(Ala) in a two-step reaction: alanine is first activated by ATP to form Ala-AMP and then transferred to the acceptor end of tRNA(Ala). Also edits incorrectly charged Ser-tRNA(Ala) and Gly-tRNA(Ala) via its editing domain. This chain is Alanine--tRNA ligase, found in Novosphingobium aromaticivorans (strain ATCC 700278 / DSM 12444 / CCUG 56034 / CIP 105152 / NBRC 16084 / F199).